The primary structure comprises 671 residues: Probable potassium transport system protein Kup (671 aa).

Residues 1–43 (MSQIPSPNDPASTGAAPSSAAVPAGPSATPAPSPTAGFSLPGH) are disordered. Residues 10–37 (PASTGAAPSSAAVPAGPSATPAPSPTAG) show a composition bias toward low complexity. The next 12 membrane-spanning stretches (helical) occupy residues 52–72 (LAALAVGALGVVYGDIGTSPL), 92–112 (VLGVLSLVFWAMTFVVTFKYM), 147–167 (LMLGLFGAALLYGDGIITPAI), 181–201 (PAMERAVVPATVVILVFLFLF), 209–229 (VGAVFGPVMLVWFATIAVLGV), 255–275 (GWHGFLVLGGVVLVITGGEAL), 291–311 (WLGLAMPALLLNYLGQGALLL), 323–343 (LLAPEWALYPTIAIATAAAIV), 381–401 (IYLPEVNWMLGTACLALVLGF), 407–427 (LASAYGIAVTGTMIVTTLLFH), 441–461 (AWPLTVLFLTVDAAFFLANVV), and 465–485 (DGGWFPIAAAALVFTLMSTWK).

It belongs to the HAK/KUP transporter (TC 2.A.72) family.

The protein localises to the cell inner membrane. It carries out the reaction K(+)(in) + H(+)(in) = K(+)(out) + H(+)(out). Transport of potassium into the cell. Likely operates as a K(+):H(+) symporter. This chain is Probable potassium transport system protein Kup, found in Anaeromyxobacter dehalogenans (strain 2CP-1 / ATCC BAA-258).